The sequence spans 222 residues: C-8 sterol isomerase ERG2 (222 aa).

The helical transmembrane segment at phenylalanine 3–threonine 23 threads the bilayer.

It belongs to the ERG2 family.

It localises to the endoplasmic reticulum membrane. The catalysed reaction is fecosterol = episterol. It functions in the pathway steroid metabolism; ergosterol biosynthesis; ergosterol from zymosterol: step 2/5. Catalytic activity is inhibited by the morphilines tridemorph, fenpropimorph, and fenpropidin. Its function is as follows. C-8 sterol isomerase; part of the third module of ergosterol biosynthesis pathway that includes the late steps of the pathway. ERG2 catalyzes the reaction which results in unsaturation at C-7 in the B ring of sterols and thus converts fecosterol to episterol. The third module or late pathway involves the ergosterol synthesis itself through consecutive reactions that mainly occur in the endoplasmic reticulum (ER) membrane. Firstly, the squalene synthase ERG9 catalyzes the condensation of 2 farnesyl pyrophosphate moieties to form squalene, which is the precursor of all steroids. Squalene synthase is crucial for balancing the incorporation of farnesyl diphosphate (FPP) into sterol and nonsterol isoprene synthesis. Secondly, the squalene epoxidase ERG1 catalyzes the stereospecific oxidation of squalene to (S)-2,3-epoxysqualene, which is considered to be a rate-limiting enzyme in steroid biosynthesis. Then, the lanosterol synthase ERG7 catalyzes the cyclization of (S)-2,3 oxidosqualene to lanosterol, a reaction that forms the sterol core. In the next steps, lanosterol is transformed to zymosterol through a complex process involving various demethylation, reduction and desaturation reactions. The lanosterol 14-alpha-demethylase ERG11 (also known as CYP51) catalyzes C14-demethylation of lanosterol to produce 4,4'-dimethyl cholesta-8,14,24-triene-3-beta-ol, which is critical for ergosterol biosynthesis. The C-14 reductase ERG24 reduces the C14=C15 double bond of 4,4-dimethyl-cholesta-8,14,24-trienol to produce 4,4-dimethyl-cholesta-8,24-dienol. 4,4-dimethyl-cholesta-8,24-dienol is substrate of the C-4 demethylation complex ERG25-ERG26-ERG27 in which ERG25 catalyzes the three-step monooxygenation required for the demethylation of 4,4-dimethyl and 4alpha-methylsterols, ERG26 catalyzes the oxidative decarboxylation that results in a reduction of the 3-beta-hydroxy group at the C-3 carbon to an oxo group, and ERG27 is responsible for the reduction of the keto group on the C-3. ERG28 has a role as a scaffold to help anchor ERG25, ERG26 and ERG27 to the endoplasmic reticulum and ERG29 regulates the activity of the iron-containing C4-methylsterol oxidase ERG25. Then, the sterol 24-C-methyltransferase ERG6 catalyzes the methyl transfer from S-adenosyl-methionine to the C-24 of zymosterol to form fecosterol. The C-8 sterol isomerase ERG2 catalyzes the reaction which results in unsaturation at C-7 in the B ring of sterols and thus converts fecosterol to episterol. The sterol-C5-desaturase ERG3 then catalyzes the introduction of a C-5 double bond in the B ring to produce 5-dehydroepisterol. The C-22 sterol desaturase ERG5 further converts 5-dehydroepisterol into ergosta-5,7,22,24(28)-tetraen-3beta-ol by forming the C-22(23) double bond in the sterol side chain. Finally, ergosta-5,7,22,24(28)-tetraen-3beta-ol is substrate of the C-24(28) sterol reductase ERG4 to produce ergosterol. The chain is C-8 sterol isomerase ERG2 from Saccharomyces cerevisiae (strain ATCC 204508 / S288c) (Baker's yeast).